A 354-amino-acid chain; its full sequence is Uroporphyrinogen decarboxylase (354 aa).

Substrate-binding positions include 27–31, Phe-46, Asp-77, Tyr-154, Ser-209, and His-327; that span reads RQAGR.

Belongs to the uroporphyrinogen decarboxylase family. As to quaternary structure, homodimer.

The protein resides in the cytoplasm. The catalysed reaction is uroporphyrinogen III + 4 H(+) = coproporphyrinogen III + 4 CO2. It functions in the pathway porphyrin-containing compound metabolism; protoporphyrin-IX biosynthesis; coproporphyrinogen-III from 5-aminolevulinate: step 4/4. In terms of biological role, catalyzes the decarboxylation of four acetate groups of uroporphyrinogen-III to yield coproporphyrinogen-III. The polypeptide is Uroporphyrinogen decarboxylase (Shewanella oneidensis (strain ATCC 700550 / JCM 31522 / CIP 106686 / LMG 19005 / NCIMB 14063 / MR-1)).